The following is a 105-amino-acid chain: Small ribosomal subunit protein uS10 (105 aa).

Belongs to the universal ribosomal protein uS10 family. Part of the 30S ribosomal subunit.

Its function is as follows. Involved in the binding of tRNA to the ribosomes. The protein is Small ribosomal subunit protein uS10 of Chlamydia muridarum (strain MoPn / Nigg).